Reading from the N-terminus, the 380-residue chain is Guanine nucleotide-binding protein subunit beta (380 aa).

WD repeat units lie at residues 64-94 (GHSGKVYSLDWTPEKNWIVSASQDGRLIVWN), 106-136 (LHCPWVMACAFAPNGQSVACGGLDSACSIFN), 155-186 (GHKGYVSSCQYVPDQETRLITSSGDQTCVLWD), 203-234 (GHTADVQSVSINSSNTNMFVSGSCDTTVRLWD), 247-277 (GHEDDVNSVKFFPDGHRFGTGSDDGTCRLFD), 296-326 (NELPTVTSIAFSISGRLLFAGYSNGDCYVWD), and 342-372 (SHDGRISCLGMSSDGSALCTGSWDKNLKIWA).

It belongs to the WD repeat G protein beta family. In terms of assembly, g proteins are composed of 3 units, alpha, beta and gamma. In terms of tissue distribution, present in the root, leaf and tassel.

In terms of biological role, guanine nucleotide-binding proteins (G proteins) are involved as a modulator or transducer in various transmembrane signaling systems. The beta and gamma chains are required for the GTPase activity, for replacement of GDP by GTP, and for G protein-effector interaction. The sequence is that of Guanine nucleotide-binding protein subunit beta (GB1) from Zea mays (Maize).